Here is a 490-residue protein sequence, read N- to C-terminus: MNAPVDPKKLIKGGLHDWEVIVGMEIHAQVSSRAKLFSGASTEFGAEPNDHVSLVDAAMPGMLPVINAECVAQAVRTGLGLKAKINLRSVFDRKNYFYPDLPQGYQISQYKDPIVGEGEVLVDLADGASITVGIERLHLEQDAGKSLHDQDPTRSFVDLNRSGVALMEIVSRPDLRSSEEAKAYVTKLRTILRYLGTCDGDMEKGSLRADVNVSVRRPGEPLGTRCEIKNVNSIRFIGQAIETEARRQIAILEDGGTIDQETRLFDPTKGETRSMRSKEEAHDYRYFPDPDLLPLEFDQAYVDALAEGLPELPDAKKARFVSAFGLSPYDAGVLVAERASADYYEAVAKGRDGKAAANWVINELFGRLNKEGLSIEATPVSADQLGTIIDLIGEGVISGKIAKDLFEIVWTEGGDPRVVVESRGMKQVTDTGAIEAAVDQIIAANPDKVAQAKEKPTLLGWFVGQTMKATGGKANPAAVNALLKAKLGIE.

This sequence belongs to the GatB/GatE family. GatB subfamily. Heterotrimer of A, B and C subunits.

The enzyme catalyses L-glutamyl-tRNA(Gln) + L-glutamine + ATP + H2O = L-glutaminyl-tRNA(Gln) + L-glutamate + ADP + phosphate + H(+). It catalyses the reaction L-aspartyl-tRNA(Asn) + L-glutamine + ATP + H2O = L-asparaginyl-tRNA(Asn) + L-glutamate + ADP + phosphate + 2 H(+). Its function is as follows. Allows the formation of correctly charged Asn-tRNA(Asn) or Gln-tRNA(Gln) through the transamidation of misacylated Asp-tRNA(Asn) or Glu-tRNA(Gln) in organisms which lack either or both of asparaginyl-tRNA or glutaminyl-tRNA synthetases. The reaction takes place in the presence of glutamine and ATP through an activated phospho-Asp-tRNA(Asn) or phospho-Glu-tRNA(Gln). In Methylobacterium radiotolerans (strain ATCC 27329 / DSM 1819 / JCM 2831 / NBRC 15690 / NCIMB 10815 / 0-1), this protein is Aspartyl/glutamyl-tRNA(Asn/Gln) amidotransferase subunit B.